The following is a 243-amino-acid chain: MASSFSAESAERIIVALDGMAPDQALAFSAQVQGLRWVKVGLELFVQAGPEVVIQLRNQGLRVFLDLKFHDIPTTMAGACLRAAALGAELITVHACAGSEALQAAQAAVVEGAQSTGQPVPTLLAVTVLTSWEEHRLQRELAVEQGIAERVSQLALLAAKAGVGGCVCSPLEVASLRAQHREPFALVTPGIRPQGTSVGDQVRVMTPPAAIEAGASQLVIGRPITQSENPSGAFAQCCTALST.

Substrate is bound by residues aspartate 18, lysine 39, 66–75 (DLKFHDIPTT), threonine 130, arginine 192, glutamine 201, glycine 221, and arginine 222. Lysine 68 (proton donor) is an active-site residue.

The protein belongs to the OMP decarboxylase family. Type 1 subfamily. As to quaternary structure, homodimer.

It catalyses the reaction orotidine 5'-phosphate + H(+) = UMP + CO2. It participates in pyrimidine metabolism; UMP biosynthesis via de novo pathway; UMP from orotate: step 2/2. Functionally, catalyzes the decarboxylation of orotidine 5'-monophosphate (OMP) to uridine 5'-monophosphate (UMP). This chain is Orotidine 5'-phosphate decarboxylase, found in Synechococcus sp. (strain CC9311).